Reading from the N-terminus, the 287-residue chain is ATP synthase gamma chain (287 aa).

Belongs to the ATPase gamma chain family. As to quaternary structure, F-type ATPases have 2 components, CF(1) - the catalytic core - and CF(0) - the membrane proton channel. CF(1) has five subunits: alpha(3), beta(3), gamma(1), delta(1), epsilon(1). CF(0) has three main subunits: a, b and c.

Its subcellular location is the cell inner membrane. In terms of biological role, produces ATP from ADP in the presence of a proton gradient across the membrane. The gamma chain is believed to be important in regulating ATPase activity and the flow of protons through the CF(0) complex. This chain is ATP synthase gamma chain, found in Photorhabdus laumondii subsp. laumondii (strain DSM 15139 / CIP 105565 / TT01) (Photorhabdus luminescens subsp. laumondii).